Reading from the N-terminus, the 532-residue chain is Membrane protein insertase YidC (532 aa).

Helical transmembrane passes span 7–27 (FFIF…QSQM), 336–356 (LTIL…ITFI), 413–433 (GGFL…YMLI), 450–470 (LSSQ…MFFI), and 492–512 (PVIF…YYII).

This sequence belongs to the OXA1/ALB3/YidC family. Type 1 subfamily. As to quaternary structure, interacts with the Sec translocase complex via SecD. Specifically interacts with transmembrane segments of nascent integral membrane proteins during membrane integration.

It localises to the cell membrane. Required for the insertion and/or proper folding and/or complex formation of integral membrane proteins into the membrane. Involved in integration of membrane proteins that insert both dependently and independently of the Sec translocase complex, as well as at least some lipoproteins. Aids folding of multispanning membrane proteins. This Buchnera aphidicola subsp. Acyrthosiphon pisum (strain Tuc7) protein is Membrane protein insertase YidC.